A 205-amino-acid chain; its full sequence is Ephrin-A1 (205 aa).

The N-terminal stretch at 1 to 18 (MEFFWASLLGLCCSLAAA) is a signal peptide. The region spanning 19 to 151 (NRHTVFWNSS…RLKVMIAGKI (133 aa)) is the Ephrin RBD domain. Residue N26 is glycosylated (N-linked (GlcNAc...) asparagine). Cystine bridges form between C51–C92 and C80–C140. S182 carries the GPI-anchor amidated serine lipid modification. The propeptide at 183–205 (AAPRLFPLAWAVLLLPFLLLQIP) is removed in mature form.

The protein belongs to the ephrin family. As to quaternary structure, monomer. Homodimer. Forms heterodimers with EPHA2. Binds to the receptor tyrosine kinases EPHA2, EPHA3, EPHA4, EPHA5, EPHA6 and EPHA7. Also binds with low affinity to EPHA1. Undergoes proteolysis by a metalloprotease to give rise to a soluble monomeric form. In terms of processing, N-Glycosylation is required for binding to EPHA2 receptor and inducing its internalization.

The protein localises to the cell membrane. It is found in the secreted. Cell surface GPI-bound ligand for Eph receptors, a family of receptor tyrosine kinases which are crucial for migration, repulsion and adhesion during neuronal, vascular and epithelial development. Binds promiscuously Eph receptors residing on adjacent cells, leading to contact-dependent bidirectional signaling into neighboring cells. Plays an important role in angiogenesis and tumor neovascularization. The recruitment of VAV2, VAV3 and PI3-kinase p85 subunit by phosphorylated EPHA2 is critical for EFNA1-induced RAC1 GTPase activation and vascular endothelial cell migration and assembly. Exerts anti-oncogenic effects in tumor cells through activation and down-regulation of EPHA2. Activates EPHA2 by inducing tyrosine phosphorylation which leads to its internalization and degradation. Acts as a negative regulator in the tumorigenesis of gliomas by down-regulating EPHA2 and FAK. Can evoke collapse of embryonic neuronal growth cone and regulates dendritic spine morphogenesis. This chain is Ephrin-A1 (EFNA1), found in Bos taurus (Bovine).